A 109-amino-acid chain; its full sequence is MRNPLMQPWLTEKSTGLTEQKGQYVFKVKSAANKTEIKAAVEAKFGVDVASVRTVNCLGKTKRQFTRKGVLAGKKNDWKKAFITLKEGQAIDYYSGSTDQGEEKKSNKG.

It belongs to the universal ribosomal protein uL23 family. Part of the 50S ribosomal subunit. Contacts protein L29, and trigger factor when it is bound to the ribosome.

Its function is as follows. One of the early assembly proteins it binds 23S rRNA. One of the proteins that surrounds the polypeptide exit tunnel on the outside of the ribosome. Forms the main docking site for trigger factor binding to the ribosome. This chain is Large ribosomal subunit protein uL23, found in Prosthecochloris aestuarii (strain DSM 271 / SK 413).